The sequence spans 111 residues: Nucleoid-associated protein NMA1657 (111 aa).

Belongs to the YbaB/EbfC family. As to quaternary structure, homodimer.

It localises to the cytoplasm. It is found in the nucleoid. Binds to DNA and alters its conformation. May be involved in regulation of gene expression, nucleoid organization and DNA protection. In Neisseria meningitidis serogroup A / serotype 4A (strain DSM 15465 / Z2491), this protein is Nucleoid-associated protein NMA1657.